The sequence spans 231 residues: Fibrillarin-like rRNA/tRNA 2'-O-methyltransferase (231 aa).

S-adenosyl-L-methionine-binding positions include 88–89 (TT), 106–107 (EF), 131–132 (DA), and 151–154 (DVAQ).

The protein belongs to the methyltransferase superfamily. Fibrillarin family. Interacts with nop5. Component of box C/D small ribonucleoprotein (sRNP) particles that contain rpl7ae, FlpA and nop5, plus a guide RNA.

Involved in pre-rRNA and tRNA processing. Utilizes the methyl donor S-adenosyl-L-methionine to catalyze the site-specific 2'-hydroxyl methylation of ribose moieties in rRNA and tRNA. Site specificity is provided by a guide RNA that base pairs with the substrate. Methylation occurs at a characteristic distance from the sequence involved in base pairing with the guide RNA. This chain is Fibrillarin-like rRNA/tRNA 2'-O-methyltransferase, found in Methanococcus aeolicus (strain ATCC BAA-1280 / DSM 17508 / OCM 812 / Nankai-3).